Consider the following 359-residue polypeptide: UDP-N-acetylglucosamine--N-acetylmuramyl-(pentapeptide) pyrophosphoryl-undecaprenol N-acetylglucosamine transferase (359 aa).

UDP-N-acetyl-alpha-D-glucosamine is bound by residues 15–17 (TGG), N127, R166, S191, I245, 264–269 (ALTVSE), and Q290.

It belongs to the glycosyltransferase 28 family. MurG subfamily.

It localises to the cell inner membrane. It catalyses the reaction di-trans,octa-cis-undecaprenyl diphospho-N-acetyl-alpha-D-muramoyl-L-alanyl-D-glutamyl-meso-2,6-diaminopimeloyl-D-alanyl-D-alanine + UDP-N-acetyl-alpha-D-glucosamine = di-trans,octa-cis-undecaprenyl diphospho-[N-acetyl-alpha-D-glucosaminyl-(1-&gt;4)]-N-acetyl-alpha-D-muramoyl-L-alanyl-D-glutamyl-meso-2,6-diaminopimeloyl-D-alanyl-D-alanine + UDP + H(+). It participates in cell wall biogenesis; peptidoglycan biosynthesis. Cell wall formation. Catalyzes the transfer of a GlcNAc subunit on undecaprenyl-pyrophosphoryl-MurNAc-pentapeptide (lipid intermediate I) to form undecaprenyl-pyrophosphoryl-MurNAc-(pentapeptide)GlcNAc (lipid intermediate II). The protein is UDP-N-acetylglucosamine--N-acetylmuramyl-(pentapeptide) pyrophosphoryl-undecaprenol N-acetylglucosamine transferase of Pseudomonas putida (strain ATCC 700007 / DSM 6899 / JCM 31910 / BCRC 17059 / LMG 24140 / F1).